The sequence spans 216 residues: Probable nicotinate-nucleotide adenylyltransferase (216 aa).

It belongs to the NadD family.

The enzyme catalyses nicotinate beta-D-ribonucleotide + ATP + H(+) = deamido-NAD(+) + diphosphate. It functions in the pathway cofactor biosynthesis; NAD(+) biosynthesis; deamido-NAD(+) from nicotinate D-ribonucleotide: step 1/1. Functionally, catalyzes the reversible adenylation of nicotinate mononucleotide (NaMN) to nicotinic acid adenine dinucleotide (NaAD). The sequence is that of Probable nicotinate-nucleotide adenylyltransferase from Maridesulfovibrio salexigens (strain ATCC 14822 / DSM 2638 / NCIMB 8403 / VKM B-1763) (Desulfovibrio salexigens).